A 241-amino-acid chain; its full sequence is Penton protein H240R (241 aa).

This sequence belongs to the asfivirus H240R family.

It is found in the virion. Functionally, forms the penton at the fivefold vertices of the icosahedral capsid. Together with the minor capsid proteins (p17, p49, and M1249L), forms a complicated network immediately below the outer capsid shell, stabilizing the whole capsid. In African swine fever virus (isolate Tick/Malawi/Lil 20-1/1983) (ASFV), this protein is Penton protein H240R.